Consider the following 618-residue polypeptide: Ubiquitin carboxyl-terminal hydrolase 2 (618 aa).

Residues 1–213 (MSQLSSTLKR…RSEYLTDYLE (213 aa)) are necessary for interaction with MDM4. Disordered stretches follow at residues 54-112 (VSPT…GGSG) and 246-274 (RYTLWEKNKGQASGPSRSTSPGRDTMNSK). Over residues 90–100 (KRSESQTRGNE) the composition is skewed to basic and acidic residues. The segment covering 255 to 274 (GQASGPSRSTSPGRDTMNSK) has biased composition (polar residues). A USP domain is found at 280 to 612 (AGLRNLGNTC…DAYLLFYELA (333 aa)). The active-site Nucleophile is the Cys-289. Residues 416–516 (YLEREDSRIG…FPKILVLHLK (101 aa)) form a necessary for interaction with MDM4 region. Zn(2+)-binding residues include Cys-438, Cys-441, Cys-489, and Cys-492. The active-site Proton acceptor is the His-570.

The protein belongs to the peptidase C19 family. USP2 subfamily. As to quaternary structure, homooligomer. Found in trimeric complex with MDM2 and MDM4 and USP2. Interacts with CCND1; the interaction is direct and promotes its stabilization by antagonizing ubiquitin-dependent degradation. Interacts (via N-terminus and C-terminus) with MDM2. Interacts with MDM4. Interacts with PER1. Interacts with KCNQ1; counteracts the NEDD4L-specific down-regulation of I(Ks) and restores plasma membrane localization of KCNQ1. Isoform 4: Interacts with NHERF4 and CLTC. Expressed in mesangial cells of the kidney. Isoform 1 and isoform 2 are expressed in elongated spermatids; the shorter form appearing earlier than the longer form (at protein level). Isoform 1 and isoform 2 are expressed in early round spermatids of the testis. Isoform 1 is expressed in muscle and heart. Isoform 2 is expressed in muscle, lung, heart, brain, liver and ovary. During muscle differentiation, isoform 1 expression increases before the onset of membrane fusion and decreases as the myogenic processes proceeded; un counterpart, isoform 2 expression remains low until the burst of membrane fusion but increases thereafter.

The protein resides in the cytoplasm. The protein localises to the perinuclear region. Its subcellular location is the nucleus. It localises to the membrane. The enzyme catalyses Thiol-dependent hydrolysis of ester, thioester, amide, peptide and isopeptide bonds formed by the C-terminal Gly of ubiquitin (a 76-residue protein attached to proteins as an intracellular targeting signal).. With respect to regulation, cleavage is inhibited by ubiquitin in a dosage-dependent manner. Cleavage is blocked by ubiquitin aldehyde. Functionally, hydrolase that deubiquitinates polyubiquitinated target proteins such as MDM2, MDM4 and CCND1. Isoform 1 and isoform 2 possess both ubiquitin-specific peptidase and isopeptidase activities. Deubiquitinates MDM2 without reversing MDM2-mediated p53/TP53 ubiquitination and thus indirectly promotes p53/TP53 degradation and limits p53 activity. Has no deubiquitinase activity against p53/TP53. Prevents MDM2-mediated degradation of MDM4. Plays a role in the G1/S cell-cycle progression in normal and cancer cells. Regulates the circadian clock by modulating its intrinsic circadian rhythm and its capacity to respond to external cues. Associates with clock proteins and deubiquitinates core clock component PER1 but does not affect its overall stability. Regulates the nucleocytoplasmic shuttling and nuclear retention of PER1 and its repressive role on the clock transcription factors CLOCK and BMAL1. Plays a role in the regulation of myogenic differentiation of embryonic muscle cells. Circadian clock output effector that regulates Ca(2+) absorption in the small intestine. Probably functions by regulating protein levels of the membrane scaffold protein NHERF4 in a rhythmic manner, and is therefore likely to control Ca(2+) membrane permeability mediated by the Ca(2+) channel TRPV6 in the intestine. The protein is Ubiquitin carboxyl-terminal hydrolase 2 (Usp2) of Rattus norvegicus (Rat).